The following is a 364-amino-acid chain: Alanine racemase (364 aa).

The Proton acceptor; specific for D-alanine role is filled by Lys35. Lys35 bears the N6-(pyridoxal phosphate)lysine mark. Arg136 is a substrate binding site. Tyr261 acts as the Proton acceptor; specific for L-alanine in catalysis. Substrate is bound at residue Met309.

Belongs to the alanine racemase family. It depends on pyridoxal 5'-phosphate as a cofactor.

It catalyses the reaction L-alanine = D-alanine. Its pathway is amino-acid biosynthesis; D-alanine biosynthesis; D-alanine from L-alanine: step 1/1. Its function is as follows. Catalyzes the interconversion of L-alanine and D-alanine. May also act on other amino acids. This chain is Alanine racemase (alr), found in Shewanella amazonensis (strain ATCC BAA-1098 / SB2B).